The chain runs to 256 residues: Type III pantothenate kinase (256 aa).

An ATP-binding site is contributed by 6 to 13 (DVGNTNMV). Residues tyrosine 100 and 107-110 (GADR) contribute to the substrate site. Aspartate 109 serves as the catalytic Proton acceptor. Aspartate 129 is a K(+) binding site. Position 132 (threonine 132) interacts with ATP. Threonine 184 lines the substrate pocket.

This sequence belongs to the type III pantothenate kinase family. Homodimer. It depends on NH4(+) as a cofactor. The cofactor is K(+).

The protein localises to the cytoplasm. The catalysed reaction is (R)-pantothenate + ATP = (R)-4'-phosphopantothenate + ADP + H(+). Its pathway is cofactor biosynthesis; coenzyme A biosynthesis; CoA from (R)-pantothenate: step 1/5. Functionally, catalyzes the phosphorylation of pantothenate (Pan), the first step in CoA biosynthesis. This is Type III pantothenate kinase from Clostridioides difficile (strain 630) (Peptoclostridium difficile).